The sequence spans 76 residues: ATP synthase subunit 9, mitochondrial (76 aa).

N-formylmethionine is present on methionine 1. Helical transmembrane passes span 14-34 and 52-72; these read ISTI…AALI and ILGF…SFLL.

Belongs to the ATPase C chain family. F-type ATPases have 2 components, CF(1) - the catalytic core - and CF(0) - the membrane proton channel. In yeast, the dimeric form of ATP synthase consists of 18 polypeptides: alpha, beta, gamma, delta, epsilon, 4 (B), 5 (OSCP), 6 (A), 8, 9 (C), d, E (Tim11), f, g, h, i, j and k.

It localises to the mitochondrion membrane. Functionally, mitochondrial membrane ATP synthase (F(1)F(0) ATP synthase or Complex V) produces ATP from ADP in the presence of a proton gradient across the membrane which is generated by electron transport complexes of the respiratory chain. F-type ATPases consist of two structural domains, F(1) - containing the extramembraneous catalytic core and F(0) - containing the membrane proton channel, linked together by a central stalk and a peripheral stalk. During catalysis, ATP synthesis in the catalytic domain of F(1) is coupled via a rotary mechanism of the central stalk subunits to proton translocation. Part of the complex F(0) domain. A homomeric c-ring of probably 10 subunits is part of the complex rotary element. In Saccharomyces paradoxus (Yeast), this protein is ATP synthase subunit 9, mitochondrial (ATP9).